Consider the following 246-residue polypeptide: Exosome complex component Rrp41 (246 aa).

The protein belongs to the RNase PH family. Rrp41 subfamily. Component of the archaeal exosome complex. Forms a hexameric ring-like arrangement composed of 3 Rrp41-Rrp42 heterodimers. The hexameric ring associates with a trimer of Rrp4 and/or Csl4 subunits.

It is found in the cytoplasm. In terms of biological role, catalytic component of the exosome, which is a complex involved in RNA degradation. Has 3'-&gt;5' exoribonuclease activity. Can also synthesize heteromeric RNA-tails. This is Exosome complex component Rrp41 from Pyrobaculum arsenaticum (strain DSM 13514 / JCM 11321 / PZ6).